A 321-amino-acid chain; its full sequence is Lipoyl synthase (321 aa).

Cys-68, Cys-73, Cys-79, Cys-94, Cys-98, Cys-101, and Ser-308 together coordinate [4Fe-4S] cluster. The 218-residue stretch at 80–297 (FNHGTATFMI…KDYAEEIGFT (218 aa)) folds into the Radical SAM core domain.

Belongs to the radical SAM superfamily. Lipoyl synthase family. It depends on [4Fe-4S] cluster as a cofactor.

The protein localises to the cytoplasm. The enzyme catalyses [[Fe-S] cluster scaffold protein carrying a second [4Fe-4S](2+) cluster] + N(6)-octanoyl-L-lysyl-[protein] + 2 oxidized [2Fe-2S]-[ferredoxin] + 2 S-adenosyl-L-methionine + 4 H(+) = [[Fe-S] cluster scaffold protein] + N(6)-[(R)-dihydrolipoyl]-L-lysyl-[protein] + 4 Fe(3+) + 2 hydrogen sulfide + 2 5'-deoxyadenosine + 2 L-methionine + 2 reduced [2Fe-2S]-[ferredoxin]. It participates in protein modification; protein lipoylation via endogenous pathway; protein N(6)-(lipoyl)lysine from octanoyl-[acyl-carrier-protein]: step 2/2. Its function is as follows. Catalyzes the radical-mediated insertion of two sulfur atoms into the C-6 and C-8 positions of the octanoyl moiety bound to the lipoyl domains of lipoate-dependent enzymes, thereby converting the octanoylated domains into lipoylated derivatives. The polypeptide is Lipoyl synthase (Shewanella loihica (strain ATCC BAA-1088 / PV-4)).